A 192-amino-acid chain; its full sequence is WYSSMFAANIKQEPISHHHHHHHAHHSRRQHPHDSNSNSNASSPHQSPLPSPNPPSNTNLQLEQYLKHQQQQQQQQHQQQPMDTLCAAAMTPSPSNNDQNSPLTWPGLPNPMQSIMPANLRPSPNTTTTTPPAAAPAAATIALQANDKLQALTPPMDVTPPKSPAKSQQSCAEPEKEHDLMSNSSEDMKYMA.

Disordered regions lie at residues 16–59 (SHHH…SNTN), 88–108 (AAMT…WPGL), and 151–192 (ALTP…KYMA). Residues 17–31 (HHHHHHHAHHSRRQH) are compositionally biased toward basic residues. Positions 92–103 (PSPSNNDQNSPL) are enriched in polar residues. Over residues 173–192 (EPEKEHDLMSNSSEDMKYMA) the composition is skewed to basic and acidic residues.

It belongs to the hunchback C2H2-type zinc-finger protein family.

It is found in the nucleus. In terms of biological role, gap class segmentation protein that controls development of head structures. This is Protein hunchback (hb) from Drosophila adiastola (Fruit fly).